The sequence spans 136 residues: Gilles de la Tourette syndrome chromosomal region candidate gene 1 protein (136 aa).

Residues 73 to 93 traverse the membrane as a helical segment; that stretch reads AICMEVFLFLWFIAPIYACVC.

The protein resides in the membrane. This chain is Gilles de la Tourette syndrome chromosomal region candidate gene 1 protein (GTSCR1), found in Homo sapiens (Human).